A 199-amino-acid chain; its full sequence is Outer-membrane lipoprotein LolB (199 aa).

A signal peptide spans 1–28 (MSACPAPRSPFRWLHAFTLCLLLAVLAG). Cysteine 29 is lipidated: N-palmitoyl cysteine. Cysteine 29 carries S-diacylglycerol cysteine lipidation.

This sequence belongs to the LolB family. In terms of assembly, monomer.

It is found in the cell outer membrane. In terms of biological role, plays a critical role in the incorporation of lipoproteins in the outer membrane after they are released by the LolA protein. The polypeptide is Outer-membrane lipoprotein LolB (Bordetella bronchiseptica (strain ATCC BAA-588 / NCTC 13252 / RB50) (Alcaligenes bronchisepticus)).